The primary structure comprises 203 residues: Microtubule-associated protein Jupiter (203 aa).

Ser30 carries the phosphoserine modification. Phosphothreonine occurs at positions 41 and 102. The segment covering Leu123–Lys132 has biased composition (polar residues). Disordered stretches follow at residues Leu123 to Val163 and Asn182 to Trp203. Low complexity predominate over residues Ser133–Ser146. Phosphoserine occurs at positions 135 and 146.

It belongs to the MAP Jupiter family.

It localises to the nucleus. Its subcellular location is the cytoplasm. It is found in the cytoskeleton. The protein resides in the spindle. Binds to all microtubule populations. The protein is Microtubule-associated protein Jupiter of Drosophila mojavensis (Fruit fly).